Consider the following 247-residue polypeptide: MRRGFGPLALTLFLFFFALLTLPGDGNQGSVAGSCYCDRTIPSGTQIPPATLNHMRKYLKTFHRCQFFIRFQLQSKSVCGGSQDQWVRELVNCFEHKQCGIGHGQSFHHQKHVPQASTRIPEATEGKPPDTSTAVQFQSTQQSTFPSGAPSLNKELTRHWETTILPSGYGLEARPVAEANEKQHKQQKEPGAGAGTQALVPVLSLLAIVFFLVAAMVCVLCNRRVTRQSSSGLQLCYTPVEPRPQGL.

An N-terminal signal peptide occupies residues 1–26 (MRRGFGPLALTLFLFFFALLTLPGDG). Over 27 to 198 (NQGSVAGSCY…EPGAGAGTQA (172 aa)) the chain is Extracellular. 2 disulfides stabilise this stretch: C35–C65 and C37–C79. Residues 120–152 (IPEATEGKPPDTSTAVQFQSTQQSTFPSGAPSL) form a disordered region. Low complexity predominate over residues 131–147 (TSTAVQFQSTQQSTFPS). A helical membrane pass occupies residues 199–219 (LVPVLSLLAIVFFLVAAMVCV). Over 220-247 (LCNRRVTRQSSSGLQLCYTPVEPRPQGL) the chain is Cytoplasmic.

It belongs to the intercrine alpha (chemokine CxC) family. Glycosylated.

The protein resides in the membrane. In terms of biological role, induces a strong chemotactic response. Induces calcium mobilization. Binds to CXCR6/Bonzo. Also acts as a scavenger receptor on macrophages, which specifically binds to OxLDL (oxidized low density lipoprotein), suggesting that it may be involved in pathophysiology such as atherogenesis. This is C-X-C motif chemokine 16 (Cxcl16) from Rattus norvegicus (Rat).